The following is a 728-amino-acid chain: Elongation factor 2 (728 aa).

In terms of domain architecture, tr-type G spans 18-258 (KFIRNIGIVA…MVIRHLPSPI (241 aa)). Residues 27 to 34 (AHIDHGKT), 93 to 97 (DTPGH), and 147 to 150 (NKVD) contribute to the GTP site. His594 is subject to Diphthamide.

Belongs to the TRAFAC class translation factor GTPase superfamily. Classic translation factor GTPase family. EF-G/EF-2 subfamily.

The protein localises to the cytoplasm. Its function is as follows. Catalyzes the GTP-dependent ribosomal translocation step during translation elongation. During this step, the ribosome changes from the pre-translocational (PRE) to the post-translocational (POST) state as the newly formed A-site-bound peptidyl-tRNA and P-site-bound deacylated tRNA move to the P and E sites, respectively. Catalyzes the coordinated movement of the two tRNA molecules, the mRNA and conformational changes in the ribosome. This is Elongation factor 2 (fusA) from Archaeoglobus fulgidus (strain ATCC 49558 / DSM 4304 / JCM 9628 / NBRC 100126 / VC-16).